A 268-amino-acid chain; its full sequence is Tryptophan synthase alpha chain (268 aa).

Active-site proton acceptor residues include glutamate 49 and aspartate 60.

This sequence belongs to the TrpA family. In terms of assembly, tetramer of two alpha and two beta chains.

It carries out the reaction (1S,2R)-1-C-(indol-3-yl)glycerol 3-phosphate + L-serine = D-glyceraldehyde 3-phosphate + L-tryptophan + H2O. It functions in the pathway amino-acid biosynthesis; L-tryptophan biosynthesis; L-tryptophan from chorismate: step 5/5. Functionally, the alpha subunit is responsible for the aldol cleavage of indoleglycerol phosphate to indole and glyceraldehyde 3-phosphate. This is Tryptophan synthase alpha chain from Serratia proteamaculans (strain 568).